A 505-amino-acid chain; its full sequence is Glycerol kinase (505 aa).

Thr17 contacts ADP. ATP-binding residues include Thr17, Thr18, and Ser19. Residue Thr17 participates in sn-glycerol 3-phosphate binding. Arg21 contributes to the ADP binding site. Arg87, Glu88, Tyr139, and Asp250 together coordinate sn-glycerol 3-phosphate. Glycerol contacts are provided by Arg87, Glu88, Tyr139, Asp250, and Gln251. ADP contacts are provided by Thr272 and Gly315. ATP is bound by residues Thr272, Gly315, Gln319, and Gly416. ADP contacts are provided by Gly416 and Asn420.

This sequence belongs to the FGGY kinase family.

The enzyme catalyses glycerol + ATP = sn-glycerol 3-phosphate + ADP + H(+). It participates in polyol metabolism; glycerol degradation via glycerol kinase pathway; sn-glycerol 3-phosphate from glycerol: step 1/1. With respect to regulation, inhibited by fructose 1,6-bisphosphate (FBP). In terms of biological role, key enzyme in the regulation of glycerol uptake and metabolism. Catalyzes the phosphorylation of glycerol to yield sn-glycerol 3-phosphate. The protein is Glycerol kinase of Azotobacter vinelandii (strain DJ / ATCC BAA-1303).